The primary structure comprises 1171 residues: ATP-dependent helicase/deoxyribonuclease subunit B (1171 aa).

Residues 1-390 (MSLRFVIGRA…HPLVECIRSA (390 aa)) enclose the UvrD-like helicase ATP-binding domain. 8–15 (GRAGSGKS) contributes to the ATP binding site. Positions 281–587 (MEQPRFHSPA…QFANIPPSLD (307 aa)) constitute a UvrD-like helicase C-terminal domain. Residues cysteine 805, cysteine 1129, cysteine 1132, and cysteine 1138 each contribute to the [4Fe-4S] cluster site.

Belongs to the helicase family. AddB/RexB type 1 subfamily. In terms of assembly, heterodimer of AddA and AddB. Mg(2+) is required as a cofactor. It depends on [4Fe-4S] cluster as a cofactor.

In terms of biological role, the heterodimer acts as both an ATP-dependent DNA helicase and an ATP-dependent, dual-direction single-stranded exonuclease. Recognizes the chi site generating a DNA molecule suitable for the initiation of homologous recombination. The AddB subunit has 5' -&gt; 3' nuclease activity but not helicase activity. The chain is ATP-dependent helicase/deoxyribonuclease subunit B from Bacillus cereus (strain ATCC 14579 / DSM 31 / CCUG 7414 / JCM 2152 / NBRC 15305 / NCIMB 9373 / NCTC 2599 / NRRL B-3711).